The sequence spans 405 residues: Tryptophan synthase beta chain (405 aa).

K98 is modified (N6-(pyridoxal phosphate)lysine).

It belongs to the TrpB family. Tetramer of two alpha and two beta chains. It depends on pyridoxal 5'-phosphate as a cofactor.

The catalysed reaction is (1S,2R)-1-C-(indol-3-yl)glycerol 3-phosphate + L-serine = D-glyceraldehyde 3-phosphate + L-tryptophan + H2O. It participates in amino-acid biosynthesis; L-tryptophan biosynthesis; L-tryptophan from chorismate: step 5/5. Its function is as follows. The beta subunit is responsible for the synthesis of L-tryptophan from indole and L-serine. In Afipia carboxidovorans (strain ATCC 49405 / DSM 1227 / KCTC 32145 / OM5) (Oligotropha carboxidovorans), this protein is Tryptophan synthase beta chain.